Reading from the N-terminus, the 462-residue chain is 3-ketoacyl-CoA thiolase 2, peroxisomal (462 aa).

A peroxisome-targeting transit peptide spans 1–34 (MEKAIERQRVLLEHLRPSSSSSHNYEASLSASAC). Catalysis depends on C138, which acts as the Acyl-thioester intermediate. A disulfide bond links C138 and C192. Active-site proton acceptor residues include H393 and C425.

The protein belongs to the thiolase-like superfamily. Thiolase family. Forms homodimers. In terms of tissue distribution, accumulates in etiolated cotyledons and in seedlings, also present in roots, flowers and siliques (at protein level). High levels in wounded leaves.

It localises to the peroxisome. The protein localises to the glyoxysome. It carries out the reaction an acyl-CoA + acetyl-CoA = a 3-oxoacyl-CoA + CoA. Its pathway is lipid metabolism; fatty acid metabolism. Its function is as follows. Involved in long chain fatty-acid beta-oxidation prior to gluconeogenesis during germination and subsequent seedling growth. Confers sensitivity to 2,4-dichlorophenoxybutiric acid (2,4-DB). Required for local and systemic induction of jasmonic acid (JA) biosynthesis after wounding. Seems to be involved in JA biosynthesis during senescence. May be involved in the positive regulation of abscisic acid-activated signaling pathway. The sequence is that of 3-ketoacyl-CoA thiolase 2, peroxisomal (PED1) from Arabidopsis thaliana (Mouse-ear cress).